Reading from the N-terminus, the 338-residue chain is Mitochondrial glutathione transporter SLC25A40 (338 aa).

Solcar repeat units lie at residues 13 to 131, 139 to 223, and 233 to 327; these read VTPL…LTAL, NESR…LKKW, and PTFM…GKSF. A run of 6 helical transmembrane segments spans residues 19-39, 103-123, 145-165, 199-220, 239-259, and 298-318; these read MFASCTGAILTSLMVTPFDVV, LWSGLPPTLVMAVPATVIYFT, IVAGIVARLGAVTVISPLELI, WAPTILRDVPFSAMYWYNYEVL, FTSGALSGSFAAVVTLPFDVV, and GLFTGLIPRLIKIAPACAVMI.

The protein belongs to the mitochondrial carrier (TC 2.A.29) family.

The protein localises to the mitochondrion inner membrane. It carries out the reaction glutathione(in) = glutathione(out). Probable mitochondrial transporter required for glutathione import into mitochondria. Glutathione, which plays key roles in oxidative metabolism, is produced exclusively in the cytosol and is imported in many organelles. Mitochondrial glutathione is required for the activity and stability of proteins containing iron-sulfur clusters, as well as erythropoiesis. The chain is Mitochondrial glutathione transporter SLC25A40 from Bos taurus (Bovine).